Reading from the N-terminus, the 122-residue chain is Copper metallothionein 1 (122 aa).

A cys-rich copper-binding 1 region spans residues 1–35 (MACNCPPQKNTACCSTSEAQDKCTCQKGNCECKAC). The segment at 36–50 (PNSTKTSESGGKAST) is spacer B1. Residues 51-72 (CNCGGSGEACTCPPGQCACDKC) are cys-rich copper-binding 2. A spacer B2 region spans residues 73–81 (PKKAKSVST). Residues 82–103 (CGCGGSGAACSCPPGKCACDNC) form a cys-rich copper-binding 3 region. The segment at 104–113 (PKQAQEKVSS) is spacer B3. The segment at 114-122 (CACSGSGAA) is cys-rich copper-binding 4.

This sequence belongs to the metallothionein superfamily.

The protein resides in the cytoplasm. Its subcellular location is the cell cortex. Functionally, copper metallothionein that protects the cell against copper toxicity by tightly chelating copper ions. Required for antioxidant-mediated growth rescue in the presence of fluconazole. Acts as a critical factors for lung colonization and virulence. The chain is Copper metallothionein 1 from Cryptococcus neoformans var. grubii serotype A (strain H99 / ATCC 208821 / CBS 10515 / FGSC 9487) (Filobasidiella neoformans var. grubii).